A 3033-amino-acid polypeptide reads, in one-letter code: MSTNPKPQRKTKRNTNRRPEDVKFPGGGQIVGGVYLLPRRGPRLGVRTTRKTSERSQPRGRRQPIPKDRRSTGKAWGKPGRPWPLYGNEGLGWAGWLLSPRGSRPSWGPTDPRHRSRNVGKVIDTLTCGFADLMGYIPVVGAPLSGAARAVAHGVRVLEDGVNYATGNLPGFPFSIFLLALLSCITVPVSAAQVKNTSSSYMVTNDCSNDSITWQLEAAVLHVPGCVPCERVGNTSRCWVPVSPNMAVRQPGALTQGLRTHIDMVVMSATFCSALYVGDLCGGVMLAAQVFIVSPQYHWFVQECNCSIYPGTITGHRMAWDMMMNWSPTATMILAYVMRVPEVIIDIVSGAHWGVMFGLAYFSMQGAWAKVIVILLLAAGVDAGTTTVGGAVARSTNVIAGVFSHGPQQNIQLINTNGSWHINRTALNCNDSLNTGFLAALFYTNRFNSSGCPGRLSACRNIEAFRIGWGTLQYEDNVTNPEDMRPYCWHYPPKPCGVVPARSVCGPVYCFTPSPVVVGTTDRRGVPTYTWGENETDVFLLNSTRPPQGSWFGCTWMNSTGFTKTCGAPPCRTRADFNASTDLLCPTDCFRKHPDATYIKCGSGPWLTPKCLVHYPYRLWHYPCTVNFTIFKIRMYVGGVEHRLTAACNFTRGDRCDLEDRDRSQLSPLLHSTTEWAILPCTYSDLPALSTGLLHLHQNIVDVQYMYGLSPAITKYVVRWEWVVLLFLLLADARVCACLWMLILLGQAEAALEKLVVLHAASAANCHGLLYFAIFFVAAWHIRGRVVPLTTYCLTGLWPFCLLLMALPRQAYAYDAPVHGQIGVGLLILITLFTLTPGYKTLLGQCLWWLCYLLTLGEAMIQEWVPPMQVRGGRDGIAWAVTIFCPGVVFDITKWLLALLGPAYLLRAALTHVPYFVRAHALIRVCALVKQLAGGRYVQVALLALGRWTGTYIYDHLTPMSDWAASGLRDLAVAVEPIIFSPMEKKVIVWGAETAACGDILHGLPVSARLGQEILLGPADGYTSKGWKLLAPITAYAQQTRGLLGAIVVSMTGRDRTEQAGEVQILSTVSQSFLGTTISGVLWTVYHGAGNKTLAGLRGPVTQMYSSAEGDLVGWPSPPGTKSLEPCKCGAVDLYLVTRNADVIPARRRGDKRGALLSPRPISTLKGSSGGPVLCPRGHVVGLFRAAVCSRGVAKSIDFIPVETLDVVTRSPTFSDNSTPPAVPQTYQVGYLHAPTGSGKSTKVPVAYAAQGYKVLVLNPSVAATLGFGAYLSKAHGINPNIRTGVRTVMTGEAITYSTYGKFLADGGCASGAYDIIICDECHAVDATSILGIGTVLDQAETAGVRLTVLATATPPGSVTTPHPDIEEVGLGREGEIPFYGRAIPLSCIKGGRHLIFCHSKKKCDELAAALRGMGLNAVAYYRGLDVSIIPAQGDVVVVATDALMTGYTGDFDSVIDCNVAVTQAVDFSLDPTFTITTQTVPQDAVSRSQRRGRTGRGRQGTYRYVSTGERASGMFDSVVLCECYDAGAAWYDLTPAETTVRLRAYFNTPGLPVCQDHLEFWEAVFTGLTHIDAHFLSQTKQAGENFAYLVAYQATVCARAKAPPPSWDAMWKCLARLKPTLAGPTPLLYRLGPITNEVTLTHPGTKYIATCMQADLEVMTSTWVLAGGVLAAVAAYCLATGCVSIIGRLHVNQRVVVAPDKEVLYEAFDEMEECASRAALIEEGQRIAEMLKSKIQGLLQQASKQAQDIQPAMQASWPKVEQFWARHMWNFISGIQYLAGLSTLPGNPAVASMMAFSAALTSPLSTSTTILLNIMGGWLASQIAPPAGATGFVVSGLVGAAVGSIGLGKVLVDILAGYGAGISGALVAFKIMSGEKPSMEDVINLLPGILSPGALVVGVICAAILRRHVGPGEGAVQWMNRLIAFASRGNHVAPTHYVTESDASQRVTQLLGSLTITSLLRRLHNWITEDCPIPCSGSWLRDVWDWVCTILTDFKNWLTSKLFPKLPGLPFISCQKGYKGVWAGTGIMTTRCPCGANISGNVRLGSMRITGPKTCMNTWQGTFPINCYTEGQCAPKPPTNYKTAIWRVAASEYAEVTQHGSYSYVTGLTTDNLKIPCQLPSPEFFSWVDGVQIHRFAPTPKPFFRDEVSFCVGLNSYAVGSQLPCEPEPDADVLRSMLTDPPHITAETAARRLARGSPPSEASSSVSQLSAPSLRATCTTHSNTYDVDMVDANLLMEGGVAQTEPESRVPVLDFLEPMAEEESDLEPSIPSECMLPRSGFPRALPAWARPDYNPPLVESWRRPDYQPPTVAGCALPPPKKAPTPPPRRRRTVGLSESTISEALQQLAIKTFGQPPSSGDAGSSTGAGAAESGGPTSPGEPAPSETGSASSMPPLEGEPGDPDLESDQVELQPPPQGGGVAPGSGSGSWSTCSEEDDTTVCCSMSYSWTGALITPCSPEEEKLPINPLSNSLLRYHNKVYCTTSKSASQRAKKVTFDRTQVLDAHYDSVLKDIKLAASKVSARLLTLEEACQLTPPHSARSKYGFGAKEVRSLSGRAVNHIKSVWKDLLEDPQTPIPTTIMAKNEVFCVDPAKGGKKPARLIVYPDLGVRVCEKMALYDITQKLPQAVMGASYGFQYSPAQRVEYLLKAWAEKKDPMGFSYDTRCFDSTVTERDIRTEESIYQACSLPEEARTAIHSLTERLYVGGPMFNSKGQTCGYRRCRASGVLTTSMGNTITCYVKALAACKAAGIVAPTMLVCGDDLVVISESQGTEEDERNLRAFTEAMTRYSAPPGDPPRPEYDLELITSCSSNVSVALGPRGRRRYYLTRDPTTPLARAAWETVRHSPINSWLGNIIQYAPTIWVRMVLMTHFFSILMVQDTLDQNLNFEMYGSVYSVNPLDLPAIIERLHGLDAFSMHTYSHHELTRVASALRKLGAPPLRVWKSRARAVRASLISRGGKAAVCGRYLFNWAVKTKLKLTPLPEARLLDLSSWFTVGAGGGDIFHSVSRARPRSLLFGLLLLFVGVGLFLLPAR.

N-acetylserine; by host is present on Ser-2. Residues 2–23 (STNPKPQRKTKRNTNRRPEDVK) form an interaction with STAT1 region. Residues 2–58 (STNPKPQRKTKRNTNRRPEDVKFPGGGQIVGGVYLLPRRGPRLGVRTTRKTSERSQP) form an interaction with EIF2AK2/PKR region. Residues 2-59 (STNPKPQRKTKRNTNRRPEDVKFPGGGQIVGGVYLLPRRGPRLGVRTTRKTSERSQPR) form an interaction with DDX3X region. The segment at 2–75 (STNPKPQRKT…PKDRRSTGKA (74 aa)) is disordered. Over 2-168 (STNPKPQRKT…EDGVNYATGN (167 aa)) the chain is Cytoplasmic. 2 short sequence motifs (nuclear localization signal) span residues 5-13 (PKPQRKTKR) and 38-43 (PRRGPR). Basic residues predominate over residues 7–16 (PQRKTKRNTN). Residues 32–47 (GGVYLLPRRGPRLGVR) are compositionally biased toward low complexity. Phosphoserine; by host is present on Ser-53. Short sequence motifs (nuclear localization signal) lie at residues 58-64 (PRGRRQP) and 66-71 (PKDRRS). Ser-99 is subject to Phosphoserine; by host. An important for endoplasmic reticulum and mitochondrial localization region spans residues 112–152 (PRHRSRNVGKVIDTLTCGFADLMGYIPVVGAPLSGAARAVA). Ser-116 carries the phosphoserine; by host PKA modification. The interval 122–173 (VIDTLTCGFADLMGYIPVVGAPLSGAARAVAHGVRVLEDGVNYATGNLPGFP) is interaction with APOA2. The important for lipid droplets localization stretch occupies residues 164–167 (YATG). Residues 169–189 (LPGFPFSIFLLALLSCITVPV) traverse the membrane as a helical segment. A propeptide spans 178-191 (LLALLSCITVPVSA) (ER anchor for the core protein, removed in mature form by host signal peptidase). The Lumenal portion of the chain corresponds to 190 to 358 (SAAQVKNTSS…SGAHWGVMFG (169 aa)). Asn-196, Asn-209, and Asn-234 each carry an N-linked (GlcNAc...) asparagine; by host glycan. The interval 265–296 (VVMSATFCSALYVGDLCGGVMLAAQVFIVSPQ) is important for fusion. The N-linked (GlcNAc...) asparagine; by host glycan is linked to Asn-305. The helical transmembrane segment at 359–379 (LAYFSMQGAWAKVIVILLLAA) threads the bilayer. Over 380–729 (GVDAGTTTVG…WEWVVLLFLL (350 aa)) the chain is Lumenal. The interval 385 to 411 (TTTVGGAVARSTNVIAGVFSHGPQQNI) is HVR1. N-linked (GlcNAc...) (high mannose) asparagine; by host glycosylation is found at Asn-417, Asn-423, Asn-430, and Asn-448. 4 disulfide bridges follow: Cys-429–Cys-554, Cys-452–Cys-459, Cys-488–Cys-496, and Cys-505–Cys-510. The N-linked (GlcNAc...) (high mannose) asparagine; by host glycan is linked to Asn-477. The interval 484-496 (MRPYCWHYPPKPC) is CD81-binding 1. Positions 524-555 (RGVPTYTWGENETDVFLLNSTRPPQGSWFGCT) are CD81-binding 2. Asn-534, Asn-542, and Asn-558 each carry an N-linked (GlcNAc...) (high mannose) asparagine; by host glycan. Cysteines 566 and 571 form a disulfide. A glycan (N-linked (GlcNAc...) (high mannose) asparagine; by host) is linked at Asn-578. Disulfide bonds link Cys-585-Cys-589, Cys-601-Cys-624, and Cys-611-Cys-648. Asn-627 and Asn-649 each carry an N-linked (GlcNAc...) (high mannose) asparagine; by host glycan. Cys-656 and Cys-681 are oxidised to a cystine. The tract at residues 664-675 (SQLSPLLHSTTE) is EIF2AK2/eIF2-alpha phosphorylation homology domain (PePHD). The chain crosses the membrane as a helical span at residues 730–750 (LADARVCACLWMLILLGQAEA). Topologically, residues 751-761 (ALEKLVVLHAA) are lumenal. The helical transmembrane segment at 762-782 (SAANCHGLLYFAIFFVAAWHI) threads the bilayer. Residues 783–785 (RGR) lie on the Cytoplasmic side of the membrane. The chain crosses the membrane as a helical span at residues 786–807 (VVPLTTYCLTGLWPFCLLLMAL). The Lumenal segment spans residues 808–817 (PRQAYAYDAP). Residues 818–838 (VHGQIGVGLLILITLFTLTPG) traverse the membrane as a helical segment. Topologically, residues 839 to 842 (YKTL) are cytoplasmic. The helical transmembrane segment at 843 to 863 (LGQCLWWLCYLLTLGEAMIQE) threads the bilayer. Topologically, residues 864-885 (WVPPMQVRGGRDGIAWAVTIFC) are lumenal. A helical transmembrane segment spans residues 886-906 (PGVVFDITKWLLALLGPAYLL). Residues 907–1030 (RAALTHVPYF…GYTSKGWKLL (124 aa)) form the Peptidase C18 domain. The Cytoplasmic segment spans residues 907-1661 (RAALTHVPYF…CMQADLEVMT (755 aa)). The tract at residues 908–1210 (AALTHVPYFV…PVETLDVVTR (303 aa)) is protease NS2-3. Cys-926 carries the S-palmitoyl cysteine; by host lipid modification. An interaction with human SCPS1 region spans residues 933 to 953 (AGGRYVQVALLALGRWTGTYI). Residues His-956, Glu-976, and Cys-997 each act as for protease NS2 activity; shared with dimeric partner in the active site. One can recognise a Peptidase S29 domain in the interval 1031–1212 (APITAYAQQT…ETLDVVTRSP (182 aa)). Catalysis depends on charge relay system; for serine protease NS3 activity residues His-1087 and Asp-1111. Residues Cys-1127 and Cys-1129 each contribute to the Zn(2+) site. The active-site Charge relay system; for serine protease NS3 activity is the Ser-1169. The Zn(2+) site is built by Cys-1175 and His-1179. In terms of domain architecture, Helicase ATP-binding spans 1221 to 1373 (PAVPQTYQVG…PDIEEVGLGR (153 aa)). 1234 to 1241 (APTGSGKS) is a binding site for ATP. Mg(2+) contacts are provided by Ser-1241 and Glu-1321. Residues 1320–1323 (DECH) carry the DECH box motif. The segment at 1481–1501 (VPQDAVSRSQRRGRTGRGRQG) is disordered. Positions 1490–1501 (QRRGRTGRGRQG) are RNA-binding. The helical transmembrane segment at 1662 to 1682 (STWVLAGGVLAAVAAYCLATG) threads the bilayer. An NS3-binding region spans residues 1683 to 1694 (CVSIIGRLHVNQ). Residues 1683–1809 (CVSIIGRLHV…ALTSPLSTST (127 aa)) lie on the Cytoplasmic side of the membrane. A helical transmembrane segment spans residues 1810–1830 (TILLNIMGGWLASQIAPPAGA). Residues 1831–1832 (TG) are Lumenal-facing. A helical transmembrane segment spans residues 1833 to 1853 (FVVSGLVGAAVGSIGLGKVLV). The tract at residues 1837 to 1865 (GLVGAAVGSIGLGKVLVDILAGYGAGISG) is glycine zipper. Residue Asp-1854 is a topological domain, cytoplasmic. Residues 1855–1875 (ILAGYGAGISGALVAFKIMSG) form a helical membrane-spanning segment. The Lumenal segment spans residues 1876 to 1885 (EKPSMEDVIN). The chain crosses the membrane as a helical span at residues 1886–1906 (LLPGILSPGALVVGVICAAIL). The Cytoplasmic segment spans residues 1907-1976 (RRHVGPGEGA…WITEDCPIPC (70 aa)). Cys-1972 carries S-palmitoyl cysteine; by host lipidation. The S-palmitoyl cysteine; by host; partial moiety is linked to residue Cys-1976. Residues 1977 to 2007 (SGSWLRDVWDWVCTILTDFKNWLTSKLFPKL) lie within the membrane without spanning it. Residues 1982–2002 (RDVWDWVCTILTDFKNWLTSK) are membrane-binding. Residues 2008 to 3012 (PGLPFISCQK…FHSVSRARPR (1005 aa)) are Cytoplasmic-facing. The interval 2009-2225 (GLPFISCQKG…RATCTTHSNT (217 aa)) is D1; RNA-binding. Positions 2015, 2033, 2035, and 2056 each coordinate Zn(2+). Tyr-2069 is modified (phosphotyrosine; by host). An FKBP8-binding region spans residues 2124–2212 (EFFSWVDGVQ…ASSSVSQLSA (89 aa)). Residues 2124–2332 (EFFSWVDGVQ…PTPPPRRRRT (209 aa)) are transcriptional activation. Residues 2139-2143 (PTPKP) are interaction with non-structural protein 4A. The segment at 2192–2213 (RRLARGSPPSEASSSVSQLSAP) is disordered. Positions 2196–2213 (RGSPPSEASSSVSQLSAP) are enriched in low complexity. Phosphoserine; by host; in p56 is present on Ser-2198. A Phosphoserine; by host; in p58 modification is found at Ser-2201. Position 2205 is a phosphoserine; by host; in p56 and p58, regulates intracellular NS5A distribution (Ser-2205). Phosphoserine; by host; in p58 occurs at positions 2208, 2211, and 2214. The interval 2210-2249 (LSAPSLRATCTTHSNTYDVDMVDANLLMEGGVAQTEPESR) is ISDR. Residues 2214–2275 (SLRATCTTHS…LEPSIPSECM (62 aa)) are interaction with EIF2AK2/PKR. Positions 2227–2315 (DVDMVDANLL…YQPPTVAGCA (89 aa)) are D2. Residues 2228 to 2315 (VDMVDANLLM…YQPPTVAGCA (88 aa)) are disordered. The segment at 2249–2306 (RVPVLDFLEPMAEEESDLEPSIPSECMLPRSGFPRALPAWARPDYNPPLVESWRRPDY) is NS4B-binding. The interval 2281–2297 (FPRALPAWARPDYNPPL) is interaction with human PPIA/CYPA. The span at 2316–2326 (LPPPKKAPTPP) shows a compositional bias: pro residues. The SH3-binding motif lies at 2322–2325 (APTP). The residue at position 2324 (Thr-2324) is a Phosphothreonine; by host. The short motif at 2326 to 2334 (PPRRRRTVG) is the Nuclear localization signal element. Positions 2329–2442 (RRRTVGLSES…SEEDDTTVCC (114 aa)) are D3. The segment at 2336–2447 (SESTISEALQ…TTVCCSMSYS (112 aa)) is interaction with host IFI27. Lys-2350 is covalently cross-linked (Glycyl lysine isopeptide (Lys-Gly) (interchain with G-Cter in ubiquitin)). Residues 2352-2432 (FGQPPSSGDA…GSGSGSWSTC (81 aa)) form a disordered region. The segment covering 2355–2379 (PPSSGDAGSSTGAGAAESGGPTSPG) has biased composition (low complexity). Residues 2358–2381 (SGDAGSSTGAGAAESGGPTSPGEP) form a V3 region. The tract at residues 2371 to 2439 (ESGGPTSPGE…STCSEEDDTT (69 aa)) is interaction with host VAPB. A compositionally biased stretch (acidic residues) spans 2398 to 2408 (EPGDPDLESDQ). The segment covering 2417–2426 (GGGVAPGSGS) has biased composition (gly residues). Residues 2656 to 2774 (PMGFSYDTRC…ISESQGTEED (119 aa)) form the RdRp catalytic domain. 3 residues coordinate Mg(2+): Asp-2662, Asp-2760, and Asp-2761. The helical transmembrane segment at 3013–3033 (SLLFGLLLLFVGVGLFLLPAR) threads the bilayer.

Belongs to the hepacivirus polyprotein family. As to quaternary structure, homooligomer. Interacts with E1 (via C-terminus). Interacts with the non-structural protein 5A. Interacts (via N-terminus) with host STAT1 (via SH2 domain); this interaction results in decreased STAT1 phosphorylation and ubiquitin-mediated proteasome-dependent STAT1 degradation, leading to decreased IFN-stimulated gene transcription. Interacts with host STAT3; this interaction constitutively activates STAT3. Interacts with host LTBR receptor. Interacts with host TNFRSF1A receptor and possibly induces apoptosis. Interacts with host HNRPK. Interacts with host YWHAE. Interacts with host UBE3A/E6AP. Interacts with host DDX3X. Interacts with host APOA2. Interacts with host RXRA protein. Interacts with host SP110 isoform 3/Sp110b; this interaction sequesters the transcriptional corepressor SP110 away from the nucleus. Interacts with host CREB3 nuclear transcription protein; this interaction triggers cell transformation. Interacts with host ACY3. Interacts with host C1QR1. Interacts with host RBM24; this interaction, which enhances the interaction of the mature core protein with 5'-UTR, may inhibit viral translation and favor replication. Interacts (via N-terminus) with host EIF2AK2/PKR (via N-terminus); this interaction induces the autophosphorylation of EIF2AK2. Part of the viral assembly initiation complex composed of NS2, E1, E2, NS3, NS4A, NS5A and the mature core protein. Forms a heterodimer with envelope glycoprotein E2. Interacts with mature core protein. Interacts with protease NS2. The heterodimer E1/E2 interacts with host CLDN1; this interaction plays a role in viral entry into host cell. Interacts with host SPSB2 (via C-terminus). Part of the viral assembly initiation complex composed of NS2, E1, E2, NS3, NS4A, NS5A and the mature core protein. In terms of assembly, forms a heterodimer with envelope glycoprotein E1. Interacts with host CD81 and SCARB1 receptors; these interactions play a role in viral entry into host cell. Interacts with host EIF2AK2/PKR; this interaction inhibits EIF2AK2 and probably allows the virus to evade the innate immune response. Interacts with host CD209/DC-SIGN and CLEC4M/DC-SIGNR. Interact with host SPCS1; this interaction is essential for viral particle assembly. Interacts with protease NS2. The heterodimer E1/E2 interacts with host CLDN1; this interaction plays a role in viral entry into host cell. Part of the viral assembly initiation complex composed of NS2, E1, E2, NS3, NS4A, NS5A and the mature core protein. Interacts with host SLC3A2/4F2hc; the interaction may facilitate viral entry into host cell. As to quaternary structure, homohexamer. Homoheptamer. Interacts with protease NS2. Homodimer. Interacts with host SPCS1; this interaction is essential for viral particle assembly. Interacts with envelope glycoprotein E1. Interacts with envelope glycoprotein E2. Interacts with viroporin p7. Interacts with serine protease/helicase NS3. Part of the replication complex composed of NS2, NS3, NS4A, NS4B, NS5A and the RNA-directed RNA polymerase embedded in an ER-derived membranous web. Part of the viral assembly initiation complex composed of NS2, E1, E2, NS3, NS4A, NS5A and the mature core protein. Interacts with host NEURL3; this interaction prevents E1 binding to glycoprotein E2. In terms of assembly, interacts with protease NS2. Interacts with non-structural protein 4A; this interaction stabilizes the folding of NS3 serine protease. NS3-NS4A interaction is essential for NS3 activation and allows membrane anchorage of the latter. NS3/NS4A complex also prevents phosphorylation of host IRF3, thus preventing the establishment of dsRNA induced antiviral state. Interacts with host MAVS; this interaction leads to the cleavage and inhibition of host MAVS. Interacts with host TICAM1; this interaction leads to the cleavage and inhibition of host TICAM1. Interacts with host TANK-binding kinase/TBK1; this interaction results in the inhibition of the association between TBK1 and IRF3, which leads to the inhibition of IRF3 activation. Interacts with host RBM24. Part of the replication complex composed of NS2, NS3, NS4A, NS4B, NS5A and the RNA-directed RNA polymerase embedded in an ER-derived membranous web. Part of the viral assembly initiation complex composed of NS2, E1, E2, NS3, NS4A, NS5A and the mature core protein. As to quaternary structure, interacts with NS3 serine protease; this interaction stabilizes the folding of NS3 serine protease. NS3-NS4A interaction is essential for NS3 activation and allows membrane anchorage of the latter. Interacts with non-structural protein 5A (via N-terminus). Part of the replication complex composed of NS2, NS3, NS4A, NS4B, NS5A and the RNA-directed RNA polymerase embedded in an ER-derived membranous web. Part of the viral assembly initiation complex composed of NS2, E1, E2, NS3, NS4A, NS5A and the mature core protein. Homomultimer. Interacts with non-structural protein NS5A. Interacts with host PLA2G4C; this interaction likely initiates the recruitment of replication complexes to lipid droplets. Interacts with host STING; this interaction disrupts the interaction between STING and TBK1 thereby suppressing the interferon signaling. Part of the replication complex composed of NS2, NS3, NS4A, NS4B, NS5A and the RNA-directed RNA polymerase embedded in an ER-derived membranous web. In terms of assembly, monomer. Homodimer; dimerization is required for RNA-binding. Interacts with the mature core protein. Interacts (via N-terminus) with non-structural protein 4A. Interacts with non-structural protein 4B. Interacts (via region D2) with RNA-directed RNA polymerase. Part of the viral assembly initiation complex composed of NS2, E1, E2, NS3, NS4A, NS5A and the mature core protein. Part of the replication complex composed of NS2, NS3, NS4A, NS4B, NS5A and the RNA-directed RNA polymerase embedded in an ER-derived membranous web. Interacts with host GRB2. Interacts with host BIN1. Interacts with host PIK3R1. Interacts with host SRCAP. Interacts with host FKBP8. Interacts (via C-terminus) with host VAPB (via MSP domain). Interacts with host EIF2AK2/PKR; this interaction leads to disruption of EIF2AK2 dimerization by NS5A and probably allows the virus to evade the innate immune response. Interacts (via N-terminus) with host PACSIN2 (via N-terminus); this interaction attenuates protein kinase C alpha-mediated phosphorylation of PACSIN2 by disrupting the interaction between PACSIN2 and PRKCA. Interacts (via N-terminus) with host SRC kinase (via SH2 domain). Interacts with most Src-family kinases. Interacts with host IFI27 and SKP2; promotes the ubiquitin-mediated proteasomal degradation of NS5A. Interacts with host GPS2. Interacts with host TNFRSF21; this interaction allows the modulation by the virus of JNK, p38 MAPK, STAT3, and Akt signaling pathways in a DR6-dependent manner. Interacts (via N-terminus) with host CIDEB (via N-terminus); this interaction seems to regulate the association of HCV particles with APOE. Interacts with host CHKA/Choline Kinase-alpha; CHKA bridges host PI4KA and NS5A and potentiates NS5A-stimulated PI4KA activity, which then facilitates the targeting of the ternary complex to the ER for viral replication. Interacts with host SPSB2 (via C-terminus); this interaction targets NS5A for ubiquitination and degradation. Interacts with host RAB18; this interaction may promote the association of NS5A and other replicase components with lipid droplets. Interacts (via region D2) with host PPIA/CYPA; the interaction stimulates RNA-binding ability of NS5A and is dependent on the peptidyl-prolyl cis-trans isomerase activity of PPIA/CYPA. Interacts with host TRIM14; this interaction induces the degradation of NS5A. As to quaternary structure, homooligomer. Interacts with non-structural protein 5A. Interacts with host VAPB. Interacts with host PRK2/PKN2. Interacts with host HNRNPA1 and SEPT6; these interactions facilitate the viral replication. Part of the replication complex composed of NS2, NS3, NS4A, NS4B, NS5A and the RNA-directed RNA polymerase embedded in an ER-derived membranous web. Zn(2+) serves as cofactor. It depends on Mg(2+) as a cofactor. Specific enzymatic cleavages in vivo yield mature proteins. The structural proteins, core, E1, E2 and p7 are produced by proteolytic processing by host signal peptidases. The core protein is synthesized as a 23 kDa precursor which is retained in the ER membrane through the hydrophobic signal peptide. Cleavage by the signal peptidase releases the 21 kDa mature core protein. The cleavage of the core protein precursor occurs between aminoacids 176 and 188 but the exact cleavage site is not known. Some degraded forms of the core protein appear as well during the course of infection. The other proteins (p7, NS2, NS3, NS4A, NS4B, NS5A and NS5B) are cleaved by the viral proteases. Autoprocessing between NS2 and NS3 is mediated by the NS2 cysteine protease catalytic domain and regulated by the NS3 N-terminal domain. In terms of processing, phosphorylated by host PKC and PKA. Post-translationally, ubiquitinated; mediated by UBE3A and leading to core protein subsequent proteasomal degradation. Highly N-glycosylated. In terms of processing, palmitoylation is required for NS2/3 autoprocessing and E2 recruitment to membranes. Post-translationally, palmitoylated. This modification may play a role in its polymerization or in protein-protein interactions. Cleaved by host caspases which arec probably activated by the viral infection. In terms of processing, ubiquitinated. Ubiquitination, most probably at Lys-2350, mediated by host IFI27 and SKP2 leads to proteasomal degradation, restricting viral infection. Post-translationally, phosphorylated on serines in a basal form termed p56. p58 is a hyperphosphorylated form of p56. p56 and p58 coexist in the cell in roughly equivalent amounts. Hyperphosphorylation is dependent on the presence of NS4A. Host CSNK1A1/CKI-alpha, PI4KA or RPS6KB1 kinases may be responsible for NS5A phosphorylation. Phosphorylated NS5A is involved in viral replication. Tyrosine phosphorylation is essential for the interaction with host SRC. In terms of processing, the N-terminus is phosphorylated by host PRK2/PKN2.

Its subcellular location is the host endoplasmic reticulum membrane. The protein localises to the host mitochondrion membrane. It is found in the virion. The protein resides in the host cytoplasm. It localises to the host nucleus. Its subcellular location is the host lipid droplet. The protein localises to the virion membrane. It is found in the host mitochondrion. The protein resides in the host cell membrane. It localises to the host perinuclear region. The catalysed reaction is Hydrolysis of four peptide bonds in the viral precursor polyprotein, commonly with Asp or Glu in the P6 position, Cys or Thr in P1 and Ser or Ala in P1'.. It carries out the reaction a ribonucleoside 5'-triphosphate + H2O = a ribonucleoside 5'-diphosphate + phosphate + H(+). The enzyme catalyses ATP + H2O = ADP + phosphate + H(+). It catalyses the reaction RNA(n) + a ribonucleoside 5'-triphosphate = RNA(n+1) + diphosphate. Its activity is regulated as follows. Inhibited by the antiviral drug hexamethylene amiloride. Inhibition by amantadine appears to be genotype-dependent. Also inhibited by long-alkyl-chain iminosugar derivatives. Activity is up-regulated by PRK2/PKN2-mediated phosphorylation. In terms of biological role, packages viral RNA to form a viral nucleocapsid, and promotes virion budding. Participates in the viral particle production as a result of its interaction with the non-structural protein 5A. Binds RNA and may function as a RNA chaperone to induce the RNA structural rearrangements taking place during virus replication. Modulates viral translation initiation by interacting with viral IRES and 40S ribosomal subunit. Affects various cell signaling pathways, host immunity and lipid metabolism. Prevents the establishment of cellular antiviral state by blocking the interferon-alpha/beta (IFN-alpha/beta) and IFN-gamma signaling pathways and by blocking the formation of phosphorylated STAT1 and promoting ubiquitin-mediated proteasome-dependent degradation of STAT1. Activates STAT3 leading to cellular transformation. Regulates the activity of cellular genes, including c-myc and c-fos. May repress the promoter of p53, and sequester CREB3 and SP110 isoform 3/Sp110b in the cytoplasm. Represses cell cycle negative regulating factor CDKN1A, thereby interrupting an important check point of normal cell cycle regulation. Targets transcription factors involved in the regulation of inflammatory responses and in the immune response: suppresses NF-kappa-B activation, and activates AP-1. Binds to dendritic cells (DCs) via C1QR1, resulting in down-regulation of T-lymphocytes proliferation. Alters lipid metabolism by interacting with hepatocellular proteins involved in lipid accumulation and storage. Induces up-regulation of FAS promoter activity, and thereby contributes to the increased triglyceride accumulation in hepatocytes (steatosis). Functionally, forms a heterodimer with envelope glycoprotein E2, which mediates virus attachment to the host cell, virion internalization through clathrin-dependent endocytosis and fusion with host membrane. Fusion with the host cell is most likely mediated by both E1 and E2, through conformational rearrangements of the heterodimer required for fusion rather than a classical class II fusion mechanism. E1/E2 heterodimer binds host apolipoproteins such as APOB and APOE thereby forming a lipo-viro-particle (LVP). APOE associated to the LVP allows the initial virus attachment to cell surface receptors such as the heparan sulfate proteoglycans (HSPGs), syndecan-1 (SDC1), syndecan-1 (SDC2), the low-density lipoprotein receptor (LDLR) and scavenger receptor class B type I (SCARB1). The cholesterol transfer activity of SCARB1 allows E2 exposure and binding of E2 to SCARB1 and the tetraspanin CD81. E1/E2 heterodimer binding on CD81 activates the epithelial growth factor receptor (EGFR) signaling pathway. Diffusion of the complex E1-E2-EGFR-SCARB1-CD81 to the cell lateral membrane allows further interaction with Claudin 1 (CLDN1) and occludin (OCLN) to finally trigger HCV entry. Its function is as follows. Forms a heterodimer with envelope glycoprotein E1, which mediates virus attachment to the host cell, virion internalization through clathrin-dependent endocytosis and fusion with host membrane. Fusion with the host cell is most likely mediated by both E1 and E2, through conformational rearrangements of the heterodimer required for fusion rather than a classical class II fusion mechanism. The interaction between envelope glycoprotein E2 and host apolipoprotein E/APOE allows the proper assembly, maturation and infectivity of the viral particles. This interaction is probably promoted via the up-regulation of cellular autophagy by the virus. E1/E2 heterodimer binds host apolipoproteins such as APOB and APOE thereby forming a lipo-viro-particle (LVP). APOE associated to the LVP allows the initial virus attachment to cell surface receptors such as the heparan sulfate proteoglycans (HSPGs), syndecan-1 (SDC1), syndecan-1 (SDC2), the low-density lipoprotein receptor (LDLR) and scavenger receptor class B type I (SCARB1). The cholesterol transfer activity of SCARB1 allows E2 exposure and binding of E2 to SCARB1 and the tetraspanin CD81. E1/E2 heterodimer binding on CD81 activates the epithelial growth factor receptor (EGFR) signaling pathway. Diffusion of the complex E1-E2-EGFR-SCARB1-CD81 to the cell lateral membrane allows further interaction with Claudin 1 (CLDN1) and occludin (OCLN) to finally trigger HCV entry. Inhibits host EIF2AK2/PKR activation, preventing the establishment of an antiviral state. Viral ligand for CD209/DC-SIGN and CLEC4M/DC-SIGNR, which are respectively found on dendritic cells (DCs), and on liver sinusoidal endothelial cells and macrophage-like cells of lymph node sinuses. These interactions allow the capture of circulating HCV particles by these cells and subsequent facilitated transmission to permissive cells such as hepatocytes and lymphocyte subpopulations. The interaction between E2 and host amino acid transporter complex formed by SLC3A2 and SLC7A5/LAT1 may facilitate viral entry into host cell. Ion channel protein that acts as a viroporin and plays an essential role in the assembly, envelopment and secretion of viral particles. Regulates the host cell secretory pathway, which induces the intracellular retention of viral glycoproteins and favors assembly of viral particles. Creates a pore in acidic organelles and releases Ca(2+) and H(+) in the cytoplasm of infected cells, leading to a productive viral infection. High levels of cytoplasmic Ca(2+) may trigger membrane trafficking and transport of viral ER-associated proteins to viroplasms, sites of viral genome replication. This ionic imbalance induces the assembly of the inflammasome complex, which triggers the maturation of pro-IL-1beta into IL-1beta through the action of caspase-1. Targets also host mitochondria and induces mitochondrial depolarization. In addition of its role as a viroporin, acts as a lipid raft adhesion factor. In terms of biological role, cysteine protease required for the proteolytic auto-cleavage between the non-structural proteins NS2 and NS3. The N-terminus of NS3 is required for the function of NS2 protease (active region NS2-3). Promotes the initiation of viral particle assembly by mediating the interaction between structural and non-structural proteins. Functionally, displays three enzymatic activities: serine protease with a chymotrypsin-like fold, NTPase and RNA helicase. NS3 serine protease, in association with NS4A, is responsible for the cleavages of NS3-NS4A, NS4A-NS4B, NS4B-NS5A and NS5A-NS5B. The NS3/NS4A complex prevents phosphorylation of host IRF3, thus preventing the establishment of dsRNA induced antiviral state. The NS3/NS4A complex induces host amino acid transporter component SLC3A2, thus contributing to HCV propagation. NS3 RNA helicase binds to RNA and unwinds both dsDNA and dsRNA in the 3' to 5' direction, and likely resolves RNA complicated stable secondary structures in the template strand. Binds a single ATP and catalyzes the unzipping of a single base pair of dsRNA. Inhibits host antiviral proteins TBK1 and IRF3 thereby preventing the establishment of an antiviral state. Cleaves host MAVS/CARDIF thereby preventing the establishment of an antiviral state. Cleaves host TICAM1/TRIF, thereby disrupting TLR3 signaling and preventing the establishment of an antiviral state. Its function is as follows. Peptide cofactor which forms a non-covalent complex with the N-terminal of NS3 serine protease. The NS3/NS4A complex prevents phosphorylation of host IRF3, thus preventing the establishment of dsRNA induced antiviral state. The NS3/NS4A complex induces host amino acid transporter component SLC3A2, thus contributing to HCV propagation. Induces a specific membrane alteration that serves as a scaffold for the virus replication complex. This membrane alteration gives rise to the so-called ER-derived membranous web that contains the replication complex. NS4B self-interaction contributes to its function in membranous web formation. Promotes host TRIF protein degradation in a CASP8-dependent manner thereby inhibiting host TLR3-mediated interferon signaling. Disrupts the interaction between STING and TBK1 contributing to the inhibition of interferon signaling. In terms of biological role, phosphorylated protein that is indispensable for viral replication and assembly. Both hypo- and hyperphosphorylated states are required for the viral life cycle. The hyperphosphorylated form of NS5A is an inhibitor of viral replication. Involved in RNA-binding and especially in binding to the viral genome. Zinc is essential for RNA-binding. Participates in the viral particle production as a result of its interaction with the viral mature core protein. Its interaction with host VAPB may target the viral replication complex to vesicles. Down-regulates viral IRES translation initiation. Mediates interferon resistance, presumably by interacting with and inhibiting host EIF2AK2/PKR. Prevents BIN1-induced apoptosis. Acts as a transcriptional activator of some host genes important for viral replication when localized in the nucleus. Via the interaction with host PACSIN2, modulates lipid droplet formation in order to promote virion assembly. Modulates TNFRSF21/DR6 signaling pathway for viral propagation. Functionally, RNA-dependent RNA polymerase that performs primer-template recognition and RNA synthesis during viral replication. Initiates RNA transcription/replication at a flavin adenine dinucleotide (FAD), resulting in a 5'- FAD cap on viral RNAs. In this way, recognition of viral 5' RNA by host pattern recognition receptors can be bypassed, thereby evading activation of antiviral pathways. The protein is Genome polyprotein of Homo sapiens (Human).